We begin with the raw amino-acid sequence, 396 residues long: Ribosomal RNA large subunit methyltransferase I (396 aa).

A PUA domain is found at 2–79 (AIRIKLKPGR…REEEIDREFF (78 aa)).

This sequence belongs to the methyltransferase superfamily. RlmI family.

The protein resides in the cytoplasm. The enzyme catalyses cytidine(1962) in 23S rRNA + S-adenosyl-L-methionine = 5-methylcytidine(1962) in 23S rRNA + S-adenosyl-L-homocysteine + H(+). Functionally, specifically methylates the cytosine at position 1962 (m5C1962) of 23S rRNA. This Shewanella baltica (strain OS155 / ATCC BAA-1091) protein is Ribosomal RNA large subunit methyltransferase I.